We begin with the raw amino-acid sequence, 117 residues long: Holo-[acyl-carrier-protein] synthase (117 aa).

Mg(2+)-binding residues include D6 and E55.

It belongs to the P-Pant transferase superfamily. AcpS family. Requires Mg(2+) as cofactor.

It localises to the cytoplasm. It catalyses the reaction apo-[ACP] + CoA = holo-[ACP] + adenosine 3',5'-bisphosphate + H(+). Its function is as follows. Transfers the 4'-phosphopantetheine moiety from coenzyme A to a Ser of acyl-carrier-protein. The polypeptide is Holo-[acyl-carrier-protein] synthase (Chlorobaculum tepidum (strain ATCC 49652 / DSM 12025 / NBRC 103806 / TLS) (Chlorobium tepidum)).